A 246-amino-acid polypeptide reads, in one-letter code: Probable chemoreceptor glutamine deamidase CheD (246 aa).

Residues 225-246 (GAGVQPAVQKAASPYAANLSRK) are disordered.

The protein belongs to the CheD family.

The catalysed reaction is L-glutaminyl-[protein] + H2O = L-glutamyl-[protein] + NH4(+). In terms of biological role, probably deamidates glutamine residues to glutamate on methyl-accepting chemotaxis receptors (MCPs), playing an important role in chemotaxis. This is Probable chemoreceptor glutamine deamidase CheD from Burkholderia vietnamiensis (strain G4 / LMG 22486) (Burkholderia cepacia (strain R1808)).